The following is a 112-amino-acid chain: Putative pterin-4-alpha-carbinolamine dehydratase (112 aa).

Belongs to the pterin-4-alpha-carbinolamine dehydratase family.

The enzyme catalyses (4aS,6R)-4a-hydroxy-L-erythro-5,6,7,8-tetrahydrobiopterin = (6R)-L-erythro-6,7-dihydrobiopterin + H2O. This Shewanella sp. (strain MR-7) protein is Putative pterin-4-alpha-carbinolamine dehydratase.